A 221-amino-acid chain; its full sequence is U1 small nuclear ribonucleoprotein C (221 aa).

The Matrin-type zinc finger occupies 4–36 (HYCDYCDVFLTHDSVSVRKAHNSGRNHLQNVRE). The segment at 80–221 (GAGPLSGSSD…PHSRTGYGPR (142 aa)) is disordered. Pro residues predominate over residues 142–158 (YSRPPPQGGPYSRPPPD). A compositionally biased stretch (low complexity) spans 178–190 (PLGYGAPLPGAYP). Residues 191-204 (SGPPPNMRGPPPPL) are compositionally biased toward pro residues.

It belongs to the U1 small nuclear ribonucleoprotein C family. As to quaternary structure, U1 snRNP is composed of the 7 core Sm proteins B/B', D1, D2, D3, E, F and G that assemble in a heptameric protein ring on the Sm site of the small nuclear RNA to form the core snRNP, and at least 3 U1 snRNP-specific proteins U1-70K, U1-A and U1-C. U1-C interacts with U1 snRNA and the 5' splice-site region of the pre-mRNA.

Its subcellular location is the nucleus. Functionally, component of the spliceosomal U1 snRNP, which is essential for recognition of the pre-mRNA 5' splice-site and the subsequent assembly of the spliceosome. U1-C is directly involved in initial 5' splice-site recognition for both constitutive and regulated alternative splicing. The interaction with the 5' splice-site seems to precede base-pairing between the pre-mRNA and the U1 snRNA. Stimulates commitment or early (E) complex formation by stabilizing the base pairing of the 5' end of the U1 snRNA and the 5' splice-site region. The polypeptide is U1 small nuclear ribonucleoprotein C (Mycosarcoma maydis (Corn smut fungus)).